The sequence spans 185 residues: UPF0301 protein Shew_1144 (185 aa).

Belongs to the UPF0301 (AlgH) family.

In Shewanella loihica (strain ATCC BAA-1088 / PV-4), this protein is UPF0301 protein Shew_1144.